Consider the following 540-residue polypeptide: 2,3-bisphosphoglycerate-independent phosphoglycerate mutase (540 aa).

Mn(2+) contacts are provided by Asp24 and Ser74. Ser74 functions as the Phosphoserine intermediate in the catalytic mechanism. Substrate is bound by residues His135, 165 to 166 (RD), Arg197, Arg203, 268 to 271 (RPDR), and Lys341. Positions 408, 412, 449, 450, and 467 each coordinate Mn(2+).

This sequence belongs to the BPG-independent phosphoglycerate mutase family. Monomer. It depends on Mn(2+) as a cofactor.

It carries out the reaction (2R)-2-phosphoglycerate = (2R)-3-phosphoglycerate. It participates in carbohydrate degradation; glycolysis; pyruvate from D-glyceraldehyde 3-phosphate: step 3/5. Functionally, catalyzes the interconversion of 2-phosphoglycerate and 3-phosphoglycerate. The sequence is that of 2,3-bisphosphoglycerate-independent phosphoglycerate mutase from Prochlorococcus marinus (strain MIT 9313).